Consider the following 186-residue polypeptide: Negative modulator of initiation of replication (186 aa).

The protein belongs to the SeqA family. As to quaternary structure, homodimer. Polymerizes to form helical filaments.

It localises to the cytoplasm. Its function is as follows. Negative regulator of replication initiation, which contributes to regulation of DNA replication and ensures that replication initiation occurs exactly once per chromosome per cell cycle. Binds to pairs of hemimethylated GATC sequences in the oriC region, thus preventing assembly of replication proteins and re-initiation at newly replicated origins. Repression is relieved when the region becomes fully methylated. The chain is Negative modulator of initiation of replication from Haemophilus ducreyi (strain 35000HP / ATCC 700724).